The chain runs to 301 residues: D-alanine--D-alanine ligase A (301 aa).

Residues 99–293 (KRILAFGNVR…FEELLDTIIE (195 aa)) enclose the ATP-grasp domain. 126–181 (IENLGYPVFVKPNNGGSSVATTLVESKEAVKDAVLEALKYDTEVMIEEYIKGDEIT) is an ATP binding site. Residues D248, E260, and N262 each contribute to the Mg(2+) site.

Belongs to the D-alanine--D-alanine ligase family. Mg(2+) is required as a cofactor. It depends on Mn(2+) as a cofactor.

It localises to the cytoplasm. The catalysed reaction is 2 D-alanine + ATP = D-alanyl-D-alanine + ADP + phosphate + H(+). It functions in the pathway cell wall biogenesis; peptidoglycan biosynthesis. Its function is as follows. Cell wall formation. This Clostridium perfringens (strain 13 / Type A) protein is D-alanine--D-alanine ligase A.